The following is a 75-amino-acid chain: Peptide Ctri9610 (75 aa).

The first 22 residues, 1 to 22 (MNSKYLFVFLILNVIFIDLCQG), serve as a signal peptide directing secretion. Residue Lys41 is modified to Lysine amide. A propeptide spanning residues 42–75 (GTRRRELGSQYDYLQDFRKRELDLDDLLSKFPDY) is cleaved from the precursor.

Belongs to the non-disulfide-bridged peptide (NDBP) superfamily. Short antimicrobial peptide (group 4) family. Expressed by the venom gland.

The protein resides in the secreted. This Chaerilus tricostatus (Scorpion) protein is Peptide Ctri9610.